A 112-amino-acid chain; its full sequence is SRA stem-loop-interacting RNA-binding protein, mitochondrial (112 aa).

The residue at position 15 (Ser-15) is a Phosphoserine. The 80-residue stretch at 19 to 98 (PIAFVRKIPW…IHVQAQRAKA (80 aa)) folds into the RRM domain. Residue Thr-104 is modified to Phosphothreonine. Residue Ser-105 is modified to Phosphoserine.

It is found in the mitochondrion. The protein localises to the nucleus. RNA-binding protein that acts as a nuclear receptor corepressor. Probably acts by binding the SRA RNA, and repressing the SRA-mediated nuclear receptor coactivation. Binds the STR7 loop of SRA RNA. Also able to repress glucocorticoid (GR), androgen (AR), thyroid (TR) and VDR-mediated transactivation. The chain is SRA stem-loop-interacting RNA-binding protein, mitochondrial (Slirp) from Mus musculus (Mouse).